The following is a 585-amino-acid chain: Bestrophin-1 (585 aa).

The Cytoplasmic segment spans residues 1–31 (MTITYTSQVANARLGSFSRLLLCWRGSIYKL). Alanine 10 provides a ligand contact to Ca(2+). Residues 32–51 (LYGEFFIFLLCYYIIRFIYR) form a helical membrane-spanning segment. Topologically, residues 52-60 (LALTEEQQL) are extracellular. A helical membrane pass occupies residues 61-82 (MFEKLTLYCDSYIQLIPISFVL). Topologically, residues 83–237 (GFYVTLVVTR…DWISIPLVYT (155 aa)) are cytoplasmic. Residues 238-255 (QVVTVAVYSFFLTCLVGR) form a helical membrane-spanning segment. The Extracellular segment spans residues 256–274 (QFLNPAKAYPGHELDLVVP). The chain crosses the membrane as a helical span at residues 275 to 288 (VFTFLQFFFYVGWL). The Cytoplasmic segment spans residues 289 to 585 (KVAEQLINPF…ALENRDEAHS (297 aa)). Positions 293, 296, 301, and 304 each coordinate Ca(2+). The segment at 346–379 (PYTAASAQFRRASFMGSTFNISLNKEEMEFQPNQ) is auto-inhibitory segment.

This sequence belongs to the anion channel-forming bestrophin (TC 1.A.46) family. Calcium-sensitive chloride channel subfamily. Interacts with YWHAG; this interaction promotes the ligand-gated L-glutamate channel activity leading to the positive regulation of NMDA glutamate receptor activity through the L-glutamate secretion.

The protein localises to the cell membrane. The protein resides in the basolateral cell membrane. The enzyme catalyses chloride(in) = chloride(out). It catalyses the reaction hydrogencarbonate(in) = hydrogencarbonate(out). The catalysed reaction is 4-aminobutanoate(in) = 4-aminobutanoate(out). It carries out the reaction L-glutamate(out) = L-glutamate(in). Ligand-gated anion channel that allows the movement of anions across cell membranes when activated by calcium (Ca2+). Allows the movement of chloride and hydrogencarbonate. Found in a partially open conformation leading to significantly smaller chloride movement. Upon F2R/PAR-1 activation, the sequestered calcium is released into the cytosol of astrocytes, leading to the (Ca2+)-dependent release of L-glutamate into the synaptic cleft that targets the neuronal postsynaptic GRIN2A/NMDAR receptor resulting in the synaptic plasticity regulation. Upon activation of the norepinephrine-alpha-1 adrenergic receptor signaling pathway, transports as well D-serine than L-glutamate in a (Ca2+)-dependent manner, leading to activation of adjacent NMDAR receptors and therefore regulates the heterosynaptic long-term depression and metaplasticity during initial memory acquisition. Releases the 4-aminobutanoate neurotransmitter in a (Ca2+)-dependent manner, and participates in its tonic release from cerebellar glial cells. This chain is Bestrophin-1 (BEST1), found in Macaca fascicularis (Crab-eating macaque).